The chain runs to 408 residues: PTI1-like tyrosine-protein kinase 3 (408 aa).

Basic and acidic residues predominate over residues 59–76 (SSENEHLRSPKHHNDFGH). The interval 59-91 (SSENEHLRSPKHHNDFGHHTRKPQAAVKPDALK) is disordered. Residues 113-395 (FGSKSLIGEG…IVVKALQPLL (283 aa)) form the Protein kinase domain. Residues 119–127 (IGEGSYGRA) and lysine 141 each bind ATP. Catalysis depends on aspartate 245, which acts as the Proton acceptor.

It belongs to the protein kinase superfamily. Tyr protein kinase family. In terms of assembly, interacts with OXI1. In terms of processing, phosphorylated by OXI1.

It localises to the cell membrane. The catalysed reaction is L-tyrosyl-[protein] + ATP = O-phospho-L-tyrosyl-[protein] + ADP + H(+). The sequence is that of PTI1-like tyrosine-protein kinase 3 (PTI13) from Arabidopsis thaliana (Mouse-ear cress).